Reading from the N-terminus, the 450-residue chain is CBL-interacting protein kinase 23 (450 aa).

The 256-residue stretch at 13-268 (YELGRTLGEG…IAELINNEWF (256 aa)) folds into the Protein kinase domain. ATP contacts are provided by residues 19–27 (LGEGTFAKV) and K42. The active-site Proton acceptor is D136. The tract at residues 154-183 (DFGLSALSQQVREDGLLHTTCGTPNYVAPE) is activation loop. One can recognise an NAF domain in the interval 306-331 (EERPSVMNAFELISTSQGLNLGTLFE). Positions 339–368 (KRETRFASRLPANEILSKIEAAAGPMGFNV) are PPI.

This sequence belongs to the protein kinase superfamily. CAMK Ser/Thr protein kinase family. SNF1 subfamily. Requires Mn(2+) as cofactor.

The catalysed reaction is L-seryl-[protein] + ATP = O-phospho-L-seryl-[protein] + ADP + H(+). It carries out the reaction L-threonyl-[protein] + ATP = O-phospho-L-threonyl-[protein] + ADP + H(+). In terms of biological role, CIPK serine-threonine protein kinases interact with CBL proteins. Binding of a CBL protein to the regulatory NAF domain of CIPK protein lead to the activation of the kinase in a calcium-dependent manner. The protein is CBL-interacting protein kinase 23 (CIPK23) of Oryza sativa subsp. japonica (Rice).